The chain runs to 553 residues: Syntaxin-binding protein 4 (553 aa).

4 positions are modified to phosphoserine: serine 10, serine 12, serine 99, and serine 212. The PDZ domain maps to 19-105 (AFQMITIAKE…RLESAWEIAF (87 aa)). Residues 291–417 (SSEADEMERL…VLDCQLRKSE (127 aa)) adopt a coiled-coil conformation. Serine 463 is modified (phosphoserine). Residues 496-529 (DCLPYGWEEAYTADGIKYFINHVTQTTSWIHPVM) form the WW domain.

As to quaternary structure, interacts with STX4A. Phosphorylated on Ser-99 by PKB/AKT2 after insulin treatment. Phosphorylation on Ser-99 abolishes the interaction with STX4A.

Its subcellular location is the cytoplasm. In terms of biological role, plays a role in the translocation of transport vesicles from the cytoplasm to the plasma membrane. Inhibits the translocation of SLC2A4 from intracellular vesicles to the plasma membrane by STX4A binding and preventing the interaction between STX4A and VAMP2. Stimulation with insulin disrupts the interaction with STX4A, leading to increased levels of SLC2A4 at the plasma membrane. May also play a role in the regulation of insulin release by pancreatic beta cells after stimulation by glucose. In Homo sapiens (Human), this protein is Syntaxin-binding protein 4 (STXBP4).